The primary structure comprises 268 residues: ELL-associated factor 1 (268 aa).

Positions 106-268 are disordered; sequence IQVKKTRAEG…LSESGSDSDD (163 aa). Over residues 128-154 the composition is skewed to pro residues; the sequence is TRPPQTSQPPPPPPPMPFRAPTKPPVG. Ser165 carries the post-translational modification Phosphoserine. Residues 171–181 show a composition bias toward basic and acidic residues; sequence DDIKRELRAEV. The tract at residues 182-262 is necessary for transactivation activity; sequence DIIEQMSSSS…LRNDLQLSES (81 aa). The span at 188-213 shows a compositional bias: low complexity; sequence SSSSGSSSSDSESSSGSDDDSSSSGG. A compositionally biased stretch (polar residues) spans 238–268; that stretch reads NGTSRPQGSNQLMNTLRNDLQLSESGSDSDD.

This sequence belongs to the EAF family. As to quaternary structure, component of the super elongation complex (SEC), at least composed of EAF1, EAF2, CDK9, MLLT3/AF9, AFF (AFF1 or AFF4), the P-TEFb complex and ELL (ELL, ELL2 or ELL3). Interacts with ELL and ELL2. Strongly expressed in heart, brain, placenta, lung, liver, skeletal muscle, kidney, pancreas, spleen, prostate, testis, small intestine and colon. Poorly expressed in thymus.

The protein resides in the nucleus speckle. The protein localises to the nucleus. It is found in the cajal body. Functionally, acts as a transcriptional transactivator of ELL and ELL2 elongation activities. This is ELL-associated factor 1 (EAF1) from Homo sapiens (Human).